The primary structure comprises 631 residues: Acurin A biosynthesis cluster transcription regulator (631 aa).

Residues 1 to 11 (MSPNMSLTASH) are compositionally biased toward polar residues. The segment at 1 to 28 (MSPNMSLTASHPQQPQPTPQSKAQLTRQ) is disordered. Positions 30-62 (CNRCHASKLKCLRPPGVTTSKSCIRCIKADTEC) form a DNA-binding region, zn(2)-C6 fungal-type. Disordered stretches follow at residues 64-141 (YDPP…PDNR), 489-522 (CSSS…HPAT), and 536-573 (HSSS…YPTP). Basic and acidic residues predominate over residues 88-99 (IEAREPEVTDPR). The span at 119-128 (NGSLAPSSAA) shows a compositional bias: polar residues.

It is found in the nucleus. Functionally, transcription factor that positively regulates the expression of the cluster that mediates the biosynthesis of acurin A, a highly reduced polyketide coupled to a serine via a peptide bond. This is Acurin A biosynthesis cluster transcription regulator from Aspergillus aculeatus (strain ATCC 16872 / CBS 172.66 / WB 5094).